The primary structure comprises 698 residues: DNA ligase (698 aa).

Residues 47-51, 96-97, and glutamate 128 each bind NAD(+); these read DAQYD and SL. The active-site N6-AMP-lysine intermediate is the lysine 130. The NAD(+) site is built by arginine 151, glutamate 186, lysine 303, and lysine 327. Zn(2+) contacts are provided by cysteine 422, cysteine 425, cysteine 440, and cysteine 446. The 79-residue stretch at 620-698 folds into the BRCT domain; sequence GDNLLLSNQT…EEEWIKMVNE (79 aa).

It belongs to the NAD-dependent DNA ligase family. LigA subfamily. Mg(2+) serves as cofactor. Requires Mn(2+) as cofactor.

The enzyme catalyses NAD(+) + (deoxyribonucleotide)n-3'-hydroxyl + 5'-phospho-(deoxyribonucleotide)m = (deoxyribonucleotide)n+m + AMP + beta-nicotinamide D-nucleotide.. In terms of biological role, DNA ligase that catalyzes the formation of phosphodiester linkages between 5'-phosphoryl and 3'-hydroxyl groups in double-stranded DNA using NAD as a coenzyme and as the energy source for the reaction. It is essential for DNA replication and repair of damaged DNA. The polypeptide is DNA ligase (Orientia tsutsugamushi (strain Boryong) (Rickettsia tsutsugamushi)).